The following is a 430-amino-acid chain: CinA-like protein (430 aa).

It belongs to the CinA family.

The protein is CinA-like protein of Mycobacterium tuberculosis (strain ATCC 25177 / H37Ra).